The sequence spans 85 residues: U4-theraphotoxin-Hhn1a (85 aa).

The N-terminal stretch at 1–22 (MKMTLIAILTCAAVLVLHTTAA) is a signal peptide. Positions 23–48 (EELEAESQLMEVGMPDTELEAVDEER) are excised as a propeptide. Disulfide bonds link cysteine 52/cysteine 66, cysteine 56/cysteine 77, and cysteine 71/cysteine 82.

It belongs to the neurotoxin 12 (Hwtx-2) family. 02 (Hwtx-2) subfamily. In terms of assembly, monomer. In terms of tissue distribution, expressed by the venom gland.

The protein localises to the secreted. Functionally, neurotoxin active on both insects and mammals. This chain is U4-theraphotoxin-Hhn1a, found in Cyriopagopus hainanus (Chinese bird spider).